Reading from the N-terminus, the 200-residue chain is Small ribosomal subunit protein uS4 (200 aa).

Positions 22 to 42 (TGKELQKRPYPPGQHGPGQRR) are disordered. In terms of domain architecture, S4 RNA-binding spans 92 to 152 (SRLDNLVYRL…EKSRNLQVIK (61 aa)).

It belongs to the universal ribosomal protein uS4 family. Part of the 30S ribosomal subunit. Contacts protein S5. The interaction surface between S4 and S5 is involved in control of translational fidelity.

In terms of biological role, one of the primary rRNA binding proteins, it binds directly to 16S rRNA where it nucleates assembly of the body of the 30S subunit. Functionally, with S5 and S12 plays an important role in translational accuracy. In Geobacillus stearothermophilus (Bacillus stearothermophilus), this protein is Small ribosomal subunit protein uS4 (rpsD).